The sequence spans 367 residues: Molybdopterin synthase catalytic subunit (367 aa).

Substrate contacts are provided by residues 101 to 102 (HR), Lys-117, and 124 to 126 (KKE). Residues 325 to 350 (RHFTKREPSSMEAAPPKKSRKKSYSA) are disordered.

It belongs to the MoaE family. MOCS2B subfamily. As to quaternary structure, heterotetramer; composed of 2 small (Mocs2A) and 2 large (Mocs2B) subunits. Component of the Ada2a-containing (ATAC) complex composed of at least Ada2a, Atac1, Hcf, Ada3, Gcn5, Mocs2B, Charac-14, Atac3, Atac2, NC2beta and wds.

Its subcellular location is the cytoplasm. The protein localises to the nucleus. The catalysed reaction is 2 [molybdopterin-synthase sulfur-carrier protein]-C-terminal-Gly-aminoethanethioate + cyclic pyranopterin phosphate + H2O = molybdopterin + 2 [molybdopterin-synthase sulfur-carrier protein]-C-terminal Gly-Gly + 2 H(+). It participates in cofactor biosynthesis; molybdopterin biosynthesis. Its function is as follows. Catalytic subunit of the molybdopterin synthase complex, a complex that catalyzes the conversion of precursor Z into molybdopterin. Acts by mediating the incorporation of 2 sulfur atoms from thiocarboxylated Mocs2A into precursor Z to generate a dithiolene group. Involved during biosynthesis of the molybdenum cofactor. The chain is Molybdopterin synthase catalytic subunit from Drosophila melanogaster (Fruit fly).